Consider the following 149-residue polypeptide: Pleckstrin homology domain-containing family J member 1 (149 aa).

Residues 15-108 enclose the PH domain; it reads RAEKAAELGM…WVEALTNASY (94 aa).

The polypeptide is Pleckstrin homology domain-containing family J member 1 (plekhj1) (Xenopus laevis (African clawed frog)).